The chain runs to 21 residues: Major outer membrane protein (21 aa).

Disulfide bond interactions within and between MOMP molecules and other components form high molecular-weight oligomers.

It localises to the cell outer membrane. Its function is as follows. Structural rigidity of the outer membrane of elementary bodies and porin forming, permitting diffusion of solutes through the intracellular reticulate body membrane. This chain is Major outer membrane protein, found in Actinobacillus suis.